A 200-amino-acid chain; its full sequence is Large ribosomal subunit protein uL4 (200 aa).

Residues 38-65 (GRQGSKAQKTRSEVSGGGKKPWRQKGTG) are disordered.

This sequence belongs to the universal ribosomal protein uL4 family. Part of the 50S ribosomal subunit.

One of the primary rRNA binding proteins, this protein initially binds near the 5'-end of the 23S rRNA. It is important during the early stages of 50S assembly. It makes multiple contacts with different domains of the 23S rRNA in the assembled 50S subunit and ribosome. In terms of biological role, forms part of the polypeptide exit tunnel. The protein is Large ribosomal subunit protein uL4 of Pseudomonas aeruginosa (strain LESB58).